Consider the following 91-residue polypeptide: Small ribosomal subunit protein uS19 (91 aa).

The protein belongs to the universal ribosomal protein uS19 family.

In terms of biological role, protein S19 forms a complex with S13 that binds strongly to the 16S ribosomal RNA. This is Small ribosomal subunit protein uS19 from Sphingopyxis alaskensis (strain DSM 13593 / LMG 18877 / RB2256) (Sphingomonas alaskensis).